The sequence spans 321 residues: GDP-L-fucose synthase (321 aa).

Residue 14–20 (GGSGLVG) coordinates NADP(+). Residue Tyr143 is the Proton donor/acceptor of the active site. Residues Lys147, 170–173 (PTNV), and His186 each bind NADP(+). Substrate-binding residues include Lys194, Trp208, Arg215, and Asp277.

This sequence belongs to the NAD(P)-dependent epimerase/dehydratase family. Fucose synthase subfamily. Homodimer.

It carries out the reaction GDP-beta-L-fucose + NADP(+) = GDP-4-dehydro-alpha-D-rhamnose + NADPH + H(+). The protein operates within nucleotide-sugar biosynthesis; GDP-L-fucose biosynthesis via de novo pathway; GDP-L-fucose from GDP-alpha-D-mannose: step 2/2. Functionally, catalyzes the two-step NADP-dependent conversion of GDP-4-dehydro-6-deoxy-D-mannose to GDP-fucose, involving an epimerase and a reductase reaction. The chain is GDP-L-fucose synthase (GFUS) from Cricetulus griseus (Chinese hamster).